Reading from the N-terminus, the 230-residue chain is tRNA pseudouridine synthase B (230 aa).

The active-site Nucleophile is the Asp45.

This sequence belongs to the pseudouridine synthase TruB family. Type 1 subfamily.

It catalyses the reaction uridine(55) in tRNA = pseudouridine(55) in tRNA. Responsible for synthesis of pseudouridine from uracil-55 in the psi GC loop of transfer RNAs. The protein is tRNA pseudouridine synthase B of Endomicrobium trichonymphae.